Consider the following 496-residue polypeptide: uncharacterized protein (496 aa).

Residues D36, D81, E300, E302, D321, D323, and D375 each contribute to the Mg(2+) site.

This sequence belongs to the XPG/RAD2 endonuclease family. FEN1 subfamily. Mg(2+) is required as a cofactor.

This is an uncharacterized protein from Schizosaccharomyces pombe (strain 972 / ATCC 24843) (Fission yeast).